We begin with the raw amino-acid sequence, 137 residues long: Acidic phospholipase A2 beta-bungarotoxin A chain (137 aa).

The N-terminal stretch at 1–9 (AVCVSLLGA) is a signal peptide. Positions 10–17 (ANIPPHPL) are excised as a propeptide. 6 disulfide bridges follow: cysteine 44–cysteine 136, cysteine 46–cysteine 62, cysteine 61–cysteine 117, cysteine 68–cysteine 110, cysteine 78–cysteine 103, and cysteine 96–cysteine 108. Residues tyrosine 45, glycine 47, and glycine 49 each coordinate Ca(2+). The active site involves histidine 65. Aspartate 66 lines the Ca(2+) pocket. Aspartate 111 is a catalytic residue.

The protein belongs to the phospholipase A2 family. Group I subfamily. D49 sub-subfamily. Heterodimer; disulfide-linked. The A chain has phospholipase A2 activity and the B chain shows homology with the basic protease inhibitors. Ca(2+) serves as cofactor. In terms of tissue distribution, expressed by the venom gland.

The protein localises to the secreted. It carries out the reaction a 1,2-diacyl-sn-glycero-3-phosphocholine + H2O = a 1-acyl-sn-glycero-3-phosphocholine + a fatty acid + H(+). Its function is as follows. Beta bungarotoxin is a presynaptic neurotoxin. The A chain has phospholipase activity. PLA2 catalyzes the calcium-dependent hydrolysis of the 2-acyl groups in 3-sn-phosphoglycerides. The polypeptide is Acidic phospholipase A2 beta-bungarotoxin A chain (Bungarus candidus (Malayan krait)).